We begin with the raw amino-acid sequence, 383 residues long: Acetylornithine deacetylase (383 aa).

Residue H80 coordinates Zn(2+). D82 is a catalytic residue. Zn(2+) is bound at residue D112. E144 is an active-site residue. Positions 145, 169, and 355 each coordinate Zn(2+).

This sequence belongs to the peptidase M20A family. ArgE subfamily. Homodimer. The cofactor is Zn(2+). Co(2+) is required as a cofactor. It depends on glutathione as a cofactor.

It is found in the cytoplasm. The enzyme catalyses N(2)-acetyl-L-ornithine + H2O = L-ornithine + acetate. It functions in the pathway amino-acid biosynthesis; L-arginine biosynthesis; L-ornithine from N(2)-acetyl-L-ornithine (linear): step 1/1. In terms of biological role, catalyzes the hydrolysis of the amide bond of N(2)-acetylated L-amino acids. Cleaves the acetyl group from N-acetyl-L-ornithine to form L-ornithine, an intermediate in L-arginine biosynthesis pathway, and a branchpoint in the synthesis of polyamines. The protein is Acetylornithine deacetylase of Escherichia coli O139:H28 (strain E24377A / ETEC).